Reading from the N-terminus, the 249-residue chain is Pleckstrin homology domain-containing family F member 2 (249 aa).

At Ser16 the chain carries Phosphoserine. A PH domain is found at 35–131 (VLIGEGVLTK…WMNHINKCVT (97 aa)). At Lys44 the chain carries N6-acetyllysine. The segment at 152–212 (DSEATVCMRC…ICDFCYDLLS (61 aa)) adopts an FYVE-type zinc-finger fold. Zn(2+) is bound by residues Cys158, Cys161, Cys175, Cys178, Cys183, Cys186, Cys204, and Cys207. Residues 221–233 (PTRSDSYSQSLKS) are compositionally biased toward polar residues. The segment at 221-249 (PTRSDSYSQSLKSPLNDASDDDDDDDSSD) is disordered. Residues 238-249 (ASDDDDDDDSSD) show a composition bias toward acidic residues. Residues Ser239 and Ser248 each carry the phosphoserine modification.

In terms of assembly, may interact with EEA1. Expressed in brain, stomach and thymus, as well as in kidney, spleen, and skeletal muscle. Also expressed in peripheral blood mononuclear cells and dendritic cells.

It localises to the early endosome membrane. It is found in the endoplasmic reticulum. May play a role in early endosome fusion upstream of RAB5, hence regulating receptor trafficking and fluid-phase transport. Enhances cellular sensitivity to TNF-induced apoptosis. In Mus musculus (Mouse), this protein is Pleckstrin homology domain-containing family F member 2 (Plekhf2).